A 158-amino-acid chain; its full sequence is uncharacterized protein (158 aa).

It belongs to the mimivirus L223/L227/L812 family.

This is an uncharacterized protein from Acanthamoeba polyphaga mimivirus (APMV).